The primary structure comprises 452 residues: Na(+)/H(+) antiporter NhaA (452 aa).

11 helical membrane passes run 27–47, 78–98, 114–134, 141–161, 172–192, 201–221, 222–242, 316–336, 346–366, 388–408, and 421–441; these read FLHI…TALI, LHFW…GMEI, ILPI…YLSF, IYGW…ILAL, IILL…IAFF, GLAI…ISFA, SAWL…VTGI, PWVA…VSFA, FLIV…GILA, ILLI…VSML, and IGVL…GLIY.

It belongs to the NhaA Na(+)/H(+) (TC 2.A.33) antiporter family.

Its subcellular location is the cell inner membrane. The enzyme catalyses Na(+)(in) + 2 H(+)(out) = Na(+)(out) + 2 H(+)(in). Its function is as follows. Na(+)/H(+) antiporter that extrudes sodium in exchange for external protons. The chain is Na(+)/H(+) antiporter NhaA from Bartonella bacilliformis (strain ATCC 35685 / KC583 / Herrer 020/F12,63).